The following is a 589-amino-acid chain: Kelch-like protein 25 (589 aa).

The BTB domain maps to 46 to 114; that stretch reads TDVTLWAGDR…AYSSRIVINE (69 aa). One can recognise a BACK domain in the interval 149–250; that stretch reads CLGMMVLSDA…LPSDCLKNAV (102 aa). Kelch repeat units lie at residues 296-340, 341-388, 389-444, 446-492, 493-538, and 539-585; these read TLLI…AIGC, KVYV…ELEN, CLYV…SAKL, LFVF…VLGS, QIFI…ASGN, and KLYV…STWK.

Component of the BCR(KLHL25) E3 ubiquitin ligase complex, at least composed of CUL3, KLHL25 and RBX1.

The protein operates within protein modification; protein ubiquitination. Its function is as follows. Substrate-specific adapter of a BCR (BTB-CUL3-RBX1) E3 ubiquitin ligase complex involved in various processes, such as translation homeostasis and lipid synthesis. The BCR(KLHL25) ubiquitin ligase complex acts by mediating ubiquitination of hypophosphorylated EIF4EBP1 (4E-BP1): ubiquitination and subsequent degradation of hypophosphorylated EIF4EBP1 (4E-BP1) probably serves as a homeostatic mechanism to maintain translation and prevent eIF4E inhibition when eIF4E levels are low. The BCR(KLHL25) complex does not target EIF4EBP1 (4E-BP1) when it is hyperphosphorylated or associated with eIF4E. The BCR(KLHL25) complex also acts as a regulator of lipid synthesis by mediating ubiquitination and degradation of ACLY, thereby inhibiting lipid synthesis. BCR(KLHL25)-mediated degradation of ACLY promotes fatty acid oxidation and is required for differentiation of inducible regulatory T (iTreg) cells. This Mus musculus (Mouse) protein is Kelch-like protein 25.